A 1621-amino-acid polypeptide reads, in one-letter code: ALK tyrosine kinase receptor (1621 aa).

The first 18 residues, 1–18 (MGAAGFLWLLPPLLLAAA), serve as a signal peptide directing secretion. Over 19–1042 (SYSGAATDQR…PHLPLSLILS (1024 aa)) the chain is Extracellular. The segment at 48–70 (RLQRKSLAVDFVVPSLFRVYARD) is heparin-binding region. 11 N-linked (GlcNAc...) asparagine glycosylation sites follow: Asn174, Asn248, Asn289, Asn328, Asn415, Asn428, Asn449, Asn567, Asn575, Asn631, and Asn673. The 164-residue stretch at 268–431 (LECSFDFPCE…DFFALKNCSE (164 aa)) folds into the MAM 1 domain. One can recognise an LDL-receptor class A domain in the interval 441-477 (LQSSFTCWNGTVLQLGQACDFHQDCAQGEDEGQLCSK). Residues 482–640 (FYCNFENGFC…NISISLDCYL (159 aa)) enclose the MAM 2 domain. Cys692 and Cys705 are joined by a disulfide. An N-linked (GlcNAc...) asparagine glycan is attached at Asn713. Cys787 and Cys798 are disulfide-bonded. Residues Asn812, Asn868, and Asn890 are each glycosylated (N-linked (GlcNAc...) asparagine). The cysteines at positions 910 and 932 are disulfide-linked. An N-linked (GlcNAc...) asparagine glycan is attached at Asn990. Cystine bridges form between Cys991-Cys999, Cys994-Cys1010, and Cys1012-Cys1025. The segment at 991-1029 (CSHCEVDECHMDPESHKVICFCDHGTVLADDGVSCIVSP) is EGF-like. A helical transmembrane segment spans residues 1043 to 1063 (VVTSALVAALVLAFSGIMIVY). The Cytoplasmic portion of the chain corresponds to 1064 to 1621 (RRKHQELQAM…SKNKVTQPGP (558 aa)). Residues Tyr1082, Tyr1096, and Tyr1100 each carry the phosphotyrosine modification. Residues 1120–1396 (ITLIRGLGHG…IEYCTQDPDV (277 aa)) enclose the Protein kinase domain. ATP-binding positions include 1126-1134 (LGHGAFGEV) and His1128. At Tyr1135 the chain carries Phosphotyrosine. ATP contacts are provided by residues Lys1154 and 1201–1203 (ELM). The Proton acceptor role is filled by Asp1253. Asp1274 serves as a coordination point for ATP. Position 1282 is a phosphotyrosine (Tyr1282). The interval 1412-1556 (EEKVPMRPKD…WTGPGAGPRR (145 aa)) is disordered. A compositionally biased stretch (basic and acidic residues) spans 1414–1423 (KVPMRPKDPE). Residues 1441–1461 (SAAPQPAALTAPGPSVKKPPG) are compositionally biased toward low complexity. The segment covering 1462–1472 (AGAGAGAGAGA) has biased composition (gly residues). Residues 1506–1518 (NKPTSLWNPTYGS) are compositionally biased toward polar residues. Tyr1516 carries the post-translational modification Phosphotyrosine. Residues 1543–1552 (AEGGWTGPGA) are compositionally biased toward gly residues.

The protein belongs to the protein kinase superfamily. Tyr protein kinase family. Insulin receptor subfamily. As to quaternary structure, homodimer; homodimerizes following heparin- and ligand-binding. Interacts with CBL, IRS1, PIK3R1 and PLCG1. Interacts with FRS2 and SHC1. Interacts with PTN and MDK. Phosphorylated at tyrosine residues by autocatalysis, which activates kinase activity. In cells not stimulated by a ligand, receptor protein tyrosine phosphatase beta and zeta complex (PTPRB/PTPRZ1) dephosphorylates ALK at the sites in ALK that are undergoing autophosphorylation through autoactivation. Mainly expressed in central nervous system (CNS) and other parts of the brain such as the paraventricular nucleus (PVN) of the hypothalamus. Expression is also found in peripheral nervous systems, eye, nasal epithelium, olfactory nerve, tongue, skin, tissue surrounding the esophagus, stomach, midgut, as well as testis and ovary.

It is found in the cell membrane. It carries out the reaction L-tyrosyl-[protein] + ATP = O-phospho-L-tyrosyl-[protein] + ADP + H(+). Its activity is regulated as follows. Activated upon ALKAL2 ligand-binding. ALKAL2-driven activation is coupled with heparin-binding. Following ligand-binding, homodimerizes and autophosphorylates, activating its kinase activity. Inactivated through dephosphorylation by receptor protein tyrosine phosphatase beta and zeta complex (PTPRB/PTPRZ1) when there is no stimulation by a ligand. In terms of biological role, neuronal receptor tyrosine kinase that is essentially and transiently expressed in specific regions of the central and peripheral nervous systems and plays an important role in the genesis and differentiation of the nervous system. Also acts as a key thinness protein involved in the resistance to weight gain: in hypothalamic neurons, controls energy expenditure acting as a negative regulator of white adipose tissue lipolysis and sympathetic tone to fine-tune energy homeostasis. Following activation by ALKAL2 ligand at the cell surface, transduces an extracellular signal into an intracellular response. In contrast, ALKAL1 is not a potent physiological ligand for ALK. Ligand-binding to the extracellular domain induces tyrosine kinase activation, leading to activation of the mitogen-activated protein kinase (MAPK) pathway. Phosphorylates almost exclusively at the first tyrosine of the Y-x-x-x-Y-Y motif. Induces tyrosine phosphorylation of CBL, FRS2, IRS1 and SHC1, as well as of the MAP kinases MAPK1/ERK2 and MAPK3/ERK1. ALK activation may also be regulated by pleiotrophin (PTN) and midkine (MDK). PTN-binding induces MAPK pathway activation, which is important for the anti-apoptotic signaling of PTN and regulation of cell proliferation. MDK-binding induces phosphorylation of the ALK target insulin receptor substrate (IRS1), activates mitogen-activated protein kinases (MAPKs) and PI3-kinase, resulting also in cell proliferation induction. Drives NF-kappa-B activation, probably through IRS1 and the activation of the AKT serine/threonine kinase. Recruitment of IRS1 to activated ALK and the activation of NF-kappa-B are essential for the autocrine growth and survival signaling of MDK. The chain is ALK tyrosine kinase receptor from Mus musculus (Mouse).